A 236-amino-acid chain; its full sequence is Purine nucleoside phosphorylase DeoD-type (236 aa).

H5 provides a ligand contact to a purine D-ribonucleoside. Phosphate contacts are provided by residues G21, R25, R44, and 88–91 (RVGT). A purine D-ribonucleoside contacts are provided by residues 180 to 182 (EME) and 204 to 205 (SD). D205 functions as the Proton donor in the catalytic mechanism.

It belongs to the PNP/UDP phosphorylase family. As to quaternary structure, homohexamer; trimer of homodimers.

The enzyme catalyses a purine D-ribonucleoside + phosphate = a purine nucleobase + alpha-D-ribose 1-phosphate. It catalyses the reaction a purine 2'-deoxy-D-ribonucleoside + phosphate = a purine nucleobase + 2-deoxy-alpha-D-ribose 1-phosphate. Catalyzes the reversible phosphorolytic breakdown of the N-glycosidic bond in the beta-(deoxy)ribonucleoside molecules, with the formation of the corresponding free purine bases and pentose-1-phosphate. The polypeptide is Purine nucleoside phosphorylase DeoD-type (Shewanella sp. (strain MR-4)).